The following is a 388-amino-acid chain: LIM/homeobox protein Lhx9 (388 aa).

LIM zinc-binding domains lie at 69–130 and 131–193; these read ISDR…CHLG and ISAS…LSYT. Disordered stretches follow at residues 239–263, 321–356, and 369–388; these read ENEADHLDRDQQPYPPSQKTKRMRT, ENGGVDKADGTSLPAPPSADSGALTPPGTATTLTDL, and SNMDSHESGSPSQTTLTNLF. Positions 267–326 form a DNA-binding region, homeobox; sequence HHQLRTMKSYFAINHNPDAKDLKQLAQKTGLTKRVLQVWFQNARAKFRRNLLRQENGGVD. Over residues 344–356 the composition is skewed to low complexity; sequence LTPPGTATTLTDL. The span at 376–388 shows a compositional bias: polar residues; the sequence is SGSPSQTTLTNLF.

Interacts with LDB1 and LDB2.

It localises to the nucleus. In terms of biological role, involved in gonadal development. The chain is LIM/homeobox protein Lhx9 (Lhx9) from Rattus norvegicus (Rat).